A 72-amino-acid polypeptide reads, in one-letter code: Translation initiation factor IF-1 (72 aa).

The 72-residue stretch at 1–72 (MAKDDVIEVE…NRGRITYRFK (72 aa)) folds into the S1-like domain. Tyr60 is subject to Phosphotyrosine.

The protein belongs to the IF-1 family. Component of the 30S ribosomal translation pre-initiation complex which assembles on the 30S ribosome in the order IF-2 and IF-3, IF-1 and N-formylmethionyl-tRNA(fMet); mRNA recruitment can occur at any time during PIC assembly.

It localises to the cytoplasm. Its function is as follows. One of the essential components for the initiation of protein synthesis. Stabilizes the binding of IF-2 and IF-3 on the 30S subunit to which N-formylmethionyl-tRNA(fMet) subsequently binds. Helps modulate mRNA selection, yielding the 30S pre-initiation complex (PIC). Upon addition of the 50S ribosomal subunit IF-1, IF-2 and IF-3 are released leaving the mature 70S translation initiation complex. The chain is Translation initiation factor IF-1 from Bacillus thuringiensis (strain Al Hakam).